A 725-amino-acid polypeptide reads, in one-letter code: Beta-adducin (725 aa).

Positions 1–22 (MSEDTVPEAASPPPSQGQHYFD) are disordered. Residues S11 and S25 each carry the phosphoserine modification. T55 is modified (phosphothreonine). Phosphoserine is present on residues S60 and S344. Residues 425 to 444 (KQQKEKTRWLNTPNTYLRVN) form an interaction with calmodulin region. The segment at 525-725 (AEKSRSPSTE…KSKKKEKVES (201 aa)) is disordered. Phosphoserine occurs at positions 530 and 532. T533 bears the Phosphothreonine mark. A Phosphoserine modification is found at S535. T561 is modified (phosphothreonine). A compositionally biased stretch (basic and acidic residues) spans 566-589 (EEYKKEVERKKLEQEQEGEKDIAT). Residues S594, S598, S602, and S606 each carry the phosphoserine modification. Over residues 596–621 (VKSTPASPVQSPSKAGTKSPAVSPSK) the composition is skewed to polar residues. Residue T612 is modified to Phosphothreonine. A phosphoserine mark is found at S614, S618, and S620. Positions 622-631 (TSEDTKKTEV) are enriched in basic and acidic residues. The residue at position 674 (T674) is a Phosphothreonine. Phosphoserine is present on residues S678, S685, S688, S692, S696, S698, S700, S702, and S712. Residues 687 to 700 (TSGPLSPEGSPSKS) are compositionally biased toward low complexity. The span at 701–725 (PSKKKKKFRTPSFLKKSKKKEKVES) shows a compositional bias: basic residues. The segment at 703–720 (KKKKKFRTPSFLKKSKKK) is interaction with calmodulin.

Belongs to the aldolase class II family. Adducin subfamily. In terms of assembly, found in a complex with ADD2, DMTN and SLC2A1. Interacts with SLC2A1. Heterodimer of an alpha and a beta subunit.

Its subcellular location is the cytoplasm. The protein localises to the cytoskeleton. It localises to the cell membrane. Membrane-cytoskeleton-associated protein that promotes the assembly of the spectrin-actin network. Binds to the erythrocyte membrane receptor SLC2A1/GLUT1 and may therefore provide a link between the spectrin cytoskeleton to the plasma membrane. Binds to calmodulin. Calmodulin binds preferentially to the beta subunit. The polypeptide is Beta-adducin (Add2) (Mus musculus (Mouse)).